We begin with the raw amino-acid sequence, 625 residues long: Glucose dehydrogenase [FAD, quinone] (625 aa).

The signal sequence occupies residues 1 to 42 (MATSPSSCDCLVGVPTGPTLASTCGGSAFMLFMGLLEVFIRS). Residue 66 to 95 (DFIVIGGGSAGSVVASRLSEVPQWKVLLIE) coordinates FAD. The active-site Proton acceptor is His544. A non-standard amino acid (selenocysteine) is located at residue Sec613.

The protein belongs to the GMC oxidoreductase family. FAD is required as a cofactor.

The protein resides in the secreted. The catalysed reaction is a quinone + D-glucose = D-glucono-1,5-lactone + a quinol. The sequence is that of Glucose dehydrogenase [FAD, quinone] (Gld) from Drosophila pseudoobscura pseudoobscura (Fruit fly).